The following is a 64-amino-acid chain: Phi-buthitoxin-Hj1a (64 aa).

An N-terminal signal peptide occupies residues Met-1 to Ala-18. Disulfide bonds link Cys-29-Cys-43, Cys-36-Cys-49, and Cys-42-Cys-58.

The protein belongs to the scorpion calcin-like family. In terms of tissue distribution, expressed by the venom gland.

The protein resides in the secreted. May increase intracellular calcium release through the activation of nuclear inositol 1,4,5-trisphosphate receptors (ITPR) of cardiomyocytes, thereby causing an increase in the contraction frequency of these cells. The sequence is that of Phi-buthitoxin-Hj1a from Hottentotta judaicus (Black scorpion).